A 189-amino-acid polypeptide reads, in one-letter code: Signal peptidase complex catalytic subunit sec11 (189 aa).

Topologically, residues 1–8 are cytoplasmic; the sequence is MQKLSFRQ. Residues 9–25 form a helical; Signal-anchor for type II membrane protein membrane-spanning segment; sequence GLAQILNLLLVLSSAYM. The Lumenal portion of the chain corresponds to 26–189; sequence GYKTLSFVTD…LLTLIQKEEQ (164 aa). Residues Ser47 and His104 each act as charge relay system in the active site. Asn114 is a glycosylation site (N-linked (GlcNAc...) asparagine). Asp129 serves as the catalytic Charge relay system. A C-terminal short (CTS) helix region spans residues 173–184; that stretch reads IMLGGLGLLTLI.

It belongs to the peptidase S26B family. As to quaternary structure, component of the signal peptidase complex (SPC) composed of a catalytic subunit sec11 and three accessory subunits spc1, spc2 and spc3. The complex induces a local thinning of the ER membrane which is used to measure the length of the signal peptide (SP) h-region of protein substrates. This ensures the selectivity of the complex towards h-regions shorter than 18-20 amino acids. SPC associates with the translocon complex.

It is found in the endoplasmic reticulum membrane. The enzyme catalyses Cleavage of hydrophobic, N-terminal signal or leader sequences from secreted and periplasmic proteins.. Catalytic component of the signal peptidase complex (SPC) which catalyzes the cleavage of N-terminal signal sequences from nascent proteins as they are translocated into the lumen of the endoplasmic reticulum. Specifically cleaves N-terminal signal peptides that contain a hydrophobic alpha-helix (h-region) shorter than 18-20 amino acids. The chain is Signal peptidase complex catalytic subunit sec11 (sec11) from Schizosaccharomyces pombe (strain 972 / ATCC 24843) (Fission yeast).